The primary structure comprises 341 residues: MAP3K12-binding inhibitory protein 1 (341 aa).

Position 91 is a phosphoserine (S91). Residues K94, K127, K137, K151, and K233 each participate in a glycyl lysine isopeptide (Lys-Gly) (interchain with G-Cter in SUMO2) cross-link. The interaction with MAP3K12 stretch occupies residues A170 to P341. The interval I269–L283 is leucine-zipper 1. N6-acetyllysine; alternate is present on K299. Residue K299 forms a Glycyl lysine isopeptide (Lys-Gly) (interchain with G-Cter in SUMO2); alternate linkage. Glycyl lysine isopeptide (Lys-Gly) (interchain with G-Cter in SUMO2) cross-links involve residues K302 and K323. The interval L312 to L327 is leucine-zipper 2.

Component of the ADA2A-containing complex (ATAC), composed of KAT14, KAT2A, TADA2L, TADA3L, ZZ3, MBIP, WDR5, YEATS2, CCDC101 and DR1. In the complex, it probably interacts directly with KAT2A, KAT14 and WDR5.

It is found in the nucleus. The protein localises to the cytoplasm. Its function is as follows. Inhibits the MAP3K12 activity to induce the activation of the JNK/SAPK pathway. Component of the ATAC complex, a complex with histone acetyltransferase activity on histones H3 and H4. This chain is MAP3K12-binding inhibitory protein 1 (Mbip), found in Mus musculus (Mouse).